The primary structure comprises 569 residues: Proline--tRNA ligase (569 aa).

This sequence belongs to the class-II aminoacyl-tRNA synthetase family. ProS type 1 subfamily. In terms of assembly, homodimer.

It is found in the cytoplasm. The catalysed reaction is tRNA(Pro) + L-proline + ATP = L-prolyl-tRNA(Pro) + AMP + diphosphate. In terms of biological role, catalyzes the attachment of proline to tRNA(Pro) in a two-step reaction: proline is first activated by ATP to form Pro-AMP and then transferred to the acceptor end of tRNA(Pro). As ProRS can inadvertently accommodate and process non-cognate amino acids such as alanine and cysteine, to avoid such errors it has two additional distinct editing activities against alanine. One activity is designated as 'pretransfer' editing and involves the tRNA(Pro)-independent hydrolysis of activated Ala-AMP. The other activity is designated 'posttransfer' editing and involves deacylation of mischarged Ala-tRNA(Pro). The misacylated Cys-tRNA(Pro) is not edited by ProRS. In Legionella pneumophila (strain Paris), this protein is Proline--tRNA ligase.